A 291-amino-acid chain; its full sequence is Taste receptor type 2 member 16 (291 aa).

Position 1 (M1) is a topological domain, extracellular. A helical transmembrane segment spans residues 2 to 22 (IPIQLTVFFMIIYVLESLTII). Residues 23 to 41 (VQSSLIVAVLGREWLQVRR) lie on the Cytoplasmic side of the membrane. The chain crosses the membrane as a helical span at residues 42 to 62 (LMPVDMILISLGISRFCLQWA). Topologically, residues 63–84 (SMLNNFCSYFNLNYVLCNLTIT) are extracellular. N80 carries N-linked (GlcNAc...) asparagine glycosylation. A helical transmembrane segment spans residues 85 to 105 (WEFFNILTFWLNSLLTVFYCI). At 106–125 (KVSSFTHHIFLWLRWRILRL) the chain is on the cytoplasmic side. The helical transmembrane segment at 126–146 (FPWILLGSLMITCVTIIPSAI) threads the bilayer. Topologically, residues 147–182 (GNYIQIQLLTMEHLPRNSTVTDKLENFHQYQFQAHT) are extracellular. Residue N163 is glycosylated (N-linked (GlcNAc...) asparagine). Residues 183-203 (VALVIPFILFLASTIFLMASL) traverse the membrane as a helical segment. The Cytoplasmic portion of the chain corresponds to 204-228 (TKQIQHHSTGHCNPSMKARFTALRS). A helical membrane pass occupies residues 229 to 249 (LAVLFIVFTSYFLTILITIIG). Over 250–257 (TLFDKRCW) the chain is Extracellular. Residues 258–278 (LWVWEAFVYAFILMHSTSLML) form a helical membrane-spanning segment. At 279 to 291 (SSPTLKRILKGKC) the chain is on the cytoplasmic side.

Belongs to the G-protein coupled receptor T2R family. In terms of assembly, interacts with RTP3 and RTP4. Expressed in a subset of gustducin-positive taste receptor cells of the tongue. Expressed in circumvallate papillae and testis.

The protein localises to the cell membrane. Functionally, gustducin-coupled receptor implicated in the perception of bitter compounds in the oral cavity and the gastrointestinal tract. Signals through PLCB2 and the calcium-regulated cation channel TRPM5. In Homo sapiens (Human), this protein is Taste receptor type 2 member 16 (TAS2R16).